The chain runs to 84 residues: Large ribosomal subunit protein bL31B (84 aa).

This sequence belongs to the bacterial ribosomal protein bL31 family. Type B subfamily. In terms of assembly, part of the 50S ribosomal subunit.

This is Large ribosomal subunit protein bL31B from Parabacteroides distasonis (strain ATCC 8503 / DSM 20701 / CIP 104284 / JCM 5825 / NCTC 11152).